We begin with the raw amino-acid sequence, 466 residues long: Ribulose bisphosphate carboxylase large chain (466 aa).

Lys-5 is subject to N6,N6,N6-trimethyllysine. Residues Asn-114 and Thr-164 each contribute to the substrate site. The active-site Proton acceptor is the Lys-166. Position 168 (Lys-168) interacts with substrate. Residues Lys-192, Asp-194, and Glu-195 each coordinate Mg(2+). At Lys-192 the chain carries N6-carboxylysine. His-285 acts as the Proton acceptor in catalysis. Positions 286, 318, and 370 each coordinate substrate.

It belongs to the RuBisCO large chain family. Type I subfamily. Heterohexadecamer of 8 large chains and 8 small chains; disulfide-linked. The disulfide link is formed within the large subunit homodimers. Requires Mg(2+) as cofactor. The disulfide bond which can form in the large chain dimeric partners within the hexadecamer appears to be associated with oxidative stress and protein turnover.

It localises to the plastid. It is found in the chloroplast. It carries out the reaction 2 (2R)-3-phosphoglycerate + 2 H(+) = D-ribulose 1,5-bisphosphate + CO2 + H2O. It catalyses the reaction D-ribulose 1,5-bisphosphate + O2 = 2-phosphoglycolate + (2R)-3-phosphoglycerate + 2 H(+). Its function is as follows. RuBisCO catalyzes two reactions: the carboxylation of D-ribulose 1,5-bisphosphate, the primary event in carbon dioxide fixation, as well as the oxidative fragmentation of the pentose substrate in the photorespiration process. Both reactions occur simultaneously and in competition at the same active site. In Drosera filiformis (Thread-leaved sundew), this protein is Ribulose bisphosphate carboxylase large chain.